Consider the following 374-residue polypeptide: DNA replication and repair protein RecF (374 aa).

Residue glycine 30–threonine 37 participates in ATP binding.

Belongs to the RecF family.

Its subcellular location is the cytoplasm. The RecF protein is involved in DNA metabolism; it is required for DNA replication and normal SOS inducibility. RecF binds preferentially to single-stranded, linear DNA. It also seems to bind ATP. The sequence is that of DNA replication and repair protein RecF from Lactobacillus gasseri (strain ATCC 33323 / DSM 20243 / BCRC 14619 / CIP 102991 / JCM 1131 / KCTC 3163 / NCIMB 11718 / NCTC 13722 / AM63).